Reading from the N-terminus, the 554-residue chain is (Z)-gamma-bisabolene synthase 2 (554 aa).

The Mg(2+) site is built by D306, D310, D450, and D458. Positions 306-310 (DDACD) match the DDXXD motif motif.

Belongs to the terpene synthase family. Tpsa subfamily. Mg(2+) serves as cofactor. Requires Mn(2+) as cofactor. As to expression, predominantly expressed in roots. Expressed in the cortex and the sub-epidermal layers of roots. Also detected in leaf hydathodes and flower stigmata.

It localises to the cytoplasm. It catalyses the reaction (2E,6E)-farnesyl diphosphate = (Z)-gamma-bisabolene + diphosphate. It functions in the pathway secondary metabolite biosynthesis; terpenoid biosynthesis. In terms of biological role, involved in sesquiterpene (C15) biosynthesis. The major product is (Z)-gamma-bisabolene with minor amounts of (E)-nerolidol and alpha-bisabolol. This is (Z)-gamma-bisabolene synthase 2 (TPS13) from Arabidopsis thaliana (Mouse-ear cress).